The sequence spans 198 residues: Large ribosomal subunit protein uL5 (198 aa).

It belongs to the universal ribosomal protein uL5 family. As to quaternary structure, part of the 50S ribosomal subunit; part of the 5S rRNA/L5/L18/L25 subcomplex. Contacts the 5S rRNA and the P site tRNA. Forms a bridge to the 30S subunit in the 70S ribosome.

This is one of the proteins that bind and probably mediate the attachment of the 5S RNA into the large ribosomal subunit, where it forms part of the central protuberance. In the 70S ribosome it contacts protein S13 of the 30S subunit (bridge B1b), connecting the 2 subunits; this bridge is implicated in subunit movement. Contacts the P site tRNA; the 5S rRNA and some of its associated proteins might help stabilize positioning of ribosome-bound tRNAs. The chain is Large ribosomal subunit protein uL5 from Chlorobium phaeovibrioides (strain DSM 265 / 1930) (Prosthecochloris vibrioformis (strain DSM 265)).